The following is a 417-amino-acid chain: 4-hydroxy-3-methylbut-2-enyl diphosphate reductase (417 aa).

Cysteine 56 serves as a coordination point for [4Fe-4S] cluster. Histidine 86 provides a ligand contact to (2E)-4-hydroxy-3-methylbut-2-enyl diphosphate. Histidine 86 contributes to the dimethylallyl diphosphate binding site. Histidine 86 lines the isopentenyl diphosphate pocket. Cysteine 151 is a [4Fe-4S] cluster binding site. Histidine 179 contributes to the (2E)-4-hydroxy-3-methylbut-2-enyl diphosphate binding site. Histidine 179 contributes to the dimethylallyl diphosphate binding site. Histidine 179 contacts isopentenyl diphosphate. The active-site Proton donor is glutamate 181. (2E)-4-hydroxy-3-methylbut-2-enyl diphosphate is bound at residue threonine 244. Cysteine 282 lines the [4Fe-4S] cluster pocket. Residues serine 311, serine 312, asparagine 313, and serine 374 each coordinate (2E)-4-hydroxy-3-methylbut-2-enyl diphosphate. Dimethylallyl diphosphate is bound by residues serine 311, serine 312, asparagine 313, and serine 374. Positions 311, 312, 313, and 374 each coordinate isopentenyl diphosphate.

It belongs to the IspH family. It depends on [4Fe-4S] cluster as a cofactor.

The catalysed reaction is isopentenyl diphosphate + 2 oxidized [2Fe-2S]-[ferredoxin] + H2O = (2E)-4-hydroxy-3-methylbut-2-enyl diphosphate + 2 reduced [2Fe-2S]-[ferredoxin] + 2 H(+). It catalyses the reaction dimethylallyl diphosphate + 2 oxidized [2Fe-2S]-[ferredoxin] + H2O = (2E)-4-hydroxy-3-methylbut-2-enyl diphosphate + 2 reduced [2Fe-2S]-[ferredoxin] + 2 H(+). It participates in isoprenoid biosynthesis; dimethylallyl diphosphate biosynthesis; dimethylallyl diphosphate from (2E)-4-hydroxy-3-methylbutenyl diphosphate: step 1/1. The protein operates within isoprenoid biosynthesis; isopentenyl diphosphate biosynthesis via DXP pathway; isopentenyl diphosphate from 1-deoxy-D-xylulose 5-phosphate: step 6/6. Catalyzes the conversion of 1-hydroxy-2-methyl-2-(E)-butenyl 4-diphosphate (HMBPP) into a mixture of isopentenyl diphosphate (IPP) and dimethylallyl diphosphate (DMAPP). Acts in the terminal step of the DOXP/MEP pathway for isoprenoid precursor biosynthesis. The protein is 4-hydroxy-3-methylbut-2-enyl diphosphate reductase of Gloeobacter violaceus (strain ATCC 29082 / PCC 7421).